Consider the following 420-residue polypeptide: Multiple sugar-binding protein (420 aa).

A signal peptide spans 1-22 (MKWYKKIGLLGIVGLTSVLLAA). Residue cysteine 23 is the site of N-palmitoyl cysteine attachment. Residue cysteine 23 is the site of S-diacylglycerol cysteine attachment.

It belongs to the bacterial solute-binding protein 1 family.

The protein localises to the cell membrane. Functionally, involved in a binding protein-dependent transport system responsible for the uptake of melibiose, raffinose and isomaltotriose. This Streptococcus mutans serotype c (strain ATCC 700610 / UA159) protein is Multiple sugar-binding protein.